Here is a 210-residue protein sequence, read N- to C-terminus: Regulator of G-protein signaling 17 (210 aa).

Residues 1-21 (MRKRQQSQNEGTPAVSQAPGN) form a disordered region. Residues 84–200 (NFDKMMKAPA…LNSQIYKSFV (117 aa)) enclose the RGS domain. Tyr137 carries the post-translational modification Phosphotyrosine.

In terms of assembly, interacts with GNAI1 and GNAQ. Interacts with GNAZ and GNAI2. Interacts with OPRM1. Forms a complex with mu-opioid receptors and G(alpha)z/i2 subunits, including GNAZ and GNAI2; the formation of this complex results in mu-opioid receptor desensitization. Interacts with HINT1. In terms of processing, N- and O-glycosylated in synapsomal membranes. Serine phosphorylated in synapsomal membranes. Post-translationally, sumoylated with SUMO1 and SUM02 in synaptosomes. The sumoylated forms act as a scaffold for sequestering mu-opioid receptor-activated G(alpha) subunits. Desumoylated by HINT1. Predominantly expressed in the cerebellum. Also expressed in the cortex and medulla. Weakly expressed in a number of peripheral tissues notably spleen, lung and leukocytes.

Its subcellular location is the membrane. It localises to the synapse. It is found in the synaptosome. The protein resides in the nucleus. The protein localises to the cytoplasm. Regulates G protein-coupled receptor signaling cascades, including signaling via muscarinic acetylcholine receptor CHRM2 and dopamine receptor DRD2. Inhibits signal transduction by increasing the GTPase activity of G protein alpha subunits, thereby driving them into their inactive GDP-bound form. Binds selectively to GNAZ and GNAI2 subunits, accelerates their GTPase activity and regulates their signaling activities. Negatively regulates mu-opioid receptor-mediated activation of the G-proteins. This is Regulator of G-protein signaling 17 (RGS17) from Homo sapiens (Human).